The sequence spans 128 residues: Saitohin (128 aa).

Residues 77–87 are compositionally biased toward polar residues; sequence SYSSEENSRNG. Residues 77-128 form a disordered region; it reads SYSSEENSRNGAEQGRQLSIEGPFQGQNCPSHPAAALPLPMRGESQATSCQV.

In terms of assembly, interacts with PRDX6.

It is found in the cytoplasm. It localises to the nucleus. The protein is Saitohin (STH) of Pan troglodytes (Chimpanzee).